A 116-amino-acid polypeptide reads, in one-letter code: Cation channel sperm-associated auxiliary subunit TMEM262 (116 aa).

Residues 1–16 (MWLQDRIATFFFPKGM) are Cytoplasmic-facing. The helical transmembrane segment at 17–38 (MLTTAALMLFFLHLGIFIRDVH) threads the bilayer. At 39 to 51 (NFCITYHYDHMSF) the chain is on the extracellular side. Residues 52–72 (HYTVVLMFSQVISICWAAMGS) form a helical membrane-spanning segment. The Cytoplasmic portion of the chain corresponds to 73–84 (LYAEMTENKYVC). A helical transmembrane segment spans residues 85 to 107 (FSALTILMLNGAMFFNRLSLEFL). Residues 108-116 (AIEYREEHH) are Extracellular-facing.

Component of the CatSper complex or CatSpermasome composed of the core pore-forming members CATSPER1, CATSPER2, CATSPER3 and CATSPER4 as well as auxiliary members CATSPERB, CATSPERG, CATSPERD, CATSPERE, CATSPERZ, C2CD6/CATSPERT, TMEM249, TMEM262 and EFCAB9. HSPA1 may be an additional auxiliary complex member. The core complex members CATSPER1, CATSPER2, CATSPER3 and CATSPER4 form a heterotetrameric channel. The auxiliary CATSPERB, CATSPERG, CATSPERD and CATSPERE subunits form a pavilion-like structure over the pore which stabilizes the complex through interactions with CATSPER4, CATSPER3, CATSPER1 and CATSPER2 respectively. TMEM262/CATSPERH interacts with CATSPERB, further stabilizing the complex. C2CD6/CATSPERT interacts at least with CATSPERD and is required for targeting the CatSper complex in the flagellar membrane.

It is found in the cell projection. The protein localises to the cilium. It localises to the flagellum membrane. Functionally, auxiliary component of the CatSper complex, a complex involved in sperm cell hyperactivation. The protein is Cation channel sperm-associated auxiliary subunit TMEM262 of Homo sapiens (Human).